The sequence spans 88 residues: Three-finger toxin 3FTx-2 (88 aa).

The first 21 residues, 1–21, serve as a signal peptide directing secretion; the sequence is MKTLLLTLVVVTIVCLDLGNT. 4 disulfides stabilise this stretch: Cys27-Cys48, Cys41-Cys66, Cys70-Cys81, and Cys82-Cys87.

This sequence belongs to the three-finger toxin family. Ancestral subfamily. Orphan group II sub-subfamily. As to expression, expressed by the venom gland.

The protein localises to the secreted. In terms of biological role, binds with low affinity to muscular (alpha-1-beta-1-delta-epsilon/CHRNA1-CHRNB1-CHRND-CHRNE) and very low affinity to neuronal (alpha-7/CHRNA7) nicotinic acetylcholine receptor (nAChR). This is Three-finger toxin 3FTx-2 from Micrurus corallinus (Brazilian coral snake).